A 212-amino-acid polypeptide reads, in one-letter code: Glycerol-3-phosphate acyltransferase (212 aa).

5 helical membrane passes run 9 to 29 (AACLVPVILTALLLLAIGYLL), 67 to 87 (GPALVVFLIDVGKGALAVLLA), 95 to 115 (WLQVLAGLAALAGHIWPVWLG), 128 to 148 (MFLGLAWPVGLACFGLFMAVI), and 168 to 190 (LMVVSGGSSAYVVVSLVASLMVL).

The protein belongs to the PlsY family. As to quaternary structure, probably interacts with PlsX.

The protein resides in the cell inner membrane. The catalysed reaction is an acyl phosphate + sn-glycerol 3-phosphate = a 1-acyl-sn-glycero-3-phosphate + phosphate. It participates in lipid metabolism; phospholipid metabolism. Its function is as follows. Catalyzes the transfer of an acyl group from acyl-phosphate (acyl-PO(4)) to glycerol-3-phosphate (G3P) to form lysophosphatidic acid (LPA). This enzyme utilizes acyl-phosphate as fatty acyl donor, but not acyl-CoA or acyl-ACP. The sequence is that of Glycerol-3-phosphate acyltransferase from Parasynechococcus marenigrum (strain WH8102).